Consider the following 467-residue polypeptide: Dynactin subunit 4 (467 aa).

Position 2 is an N-acetylalanine (A2). The stretch at 152-172 forms a coiled coil; the sequence is QQLAQKEKVERDRKKLARRRN. S203 carries the post-translational modification Phosphoserine. K222 is covalently cross-linked (Glycyl lysine isopeptide (Lys-Gly) (interchain with G-Cter in SUMO2)). At T414 the chain carries Phosphothreonine.

It belongs to the dynactin subunit 4 family. Subunit of dynactin, a multiprotein complex part of a tripartite complex with dynein and a adapter, such as BICDL1, BICD2 or HOOK3. The dynactin complex is built around ACTR1A/ACTB filament and consists of an actin-related filament composed of a shoulder domain, a pointed end and a barbed end. Its length is defined by its flexible shoulder domain. The soulder is composed of 2 DCTN1 subunits, 4 DCTN2 and 2 DCTN3. The 4 DCNT2 (via N-terminus) bind the ACTR1A filament and act as molecular rulers to determine the length. The pointed end is important for binding dynein-dynactin cargo adapters. Consists of 4 subunits: ACTR10, DCNT4, DCTN5 and DCTN6. The barbed end is composed of a CAPZA1:CAPZB heterodimers, which binds ACTR1A/ACTB filament and dynactin and stabilizes dynactin. Interacts with ATP7B, but not ATP7A, in a copper-dependent manner. Interacts with ANK2; this interaction is required for localization at costameres. Interacts with N4BP2L1.

Its subcellular location is the cytoplasm. It localises to the cytoskeleton. The protein localises to the microtubule organizing center. It is found in the centrosome. The protein resides in the stress fiber. Its subcellular location is the cell cortex. It localises to the myofibril. The protein localises to the sarcomere. Functionally, part of the dynactin complex that activates the molecular motor dynein for ultra-processive transport along microtubules. This chain is Dynactin subunit 4 (Dctn4), found in Mus musculus (Mouse).